Reading from the N-terminus, the 417-residue chain is Queuine tRNA-ribosyltransferase accessory subunit 2 (417 aa).

Zn(2+) is bound by residues Cys324, Cys326, Cys329, and His355.

The protein belongs to the queuine tRNA-ribosyltransferase family. QTRT2 subfamily. Heterodimer of a catalytic subunit and an accessory subunit. Requires Zn(2+) as cofactor.

Its subcellular location is the cytoplasm. Its function is as follows. Non-catalytic subunit of the queuine tRNA-ribosyltransferase (TGT) that catalyzes the base-exchange of a guanine (G) residue with queuine (Q) at position 34 (anticodon wobble position) in tRNAs with GU(N) anticodons (tRNA-Asp, -Asn, -His and -Tyr), resulting in the hypermodified nucleoside queuosine (7-(((4,5-cis-dihydroxy-2-cyclopenten-1-yl)amino)methyl)-7-deazaguanosine). This Drosophila persimilis (Fruit fly) protein is Queuine tRNA-ribosyltransferase accessory subunit 2.